We begin with the raw amino-acid sequence, 802 residues long: Mitogen-activated protein kinase kinase kinase 20 (802 aa).

Residue serine 2 is modified to N-acetylserine. Serine 2, serine 3, and serine 7 each carry phosphoserine. Residues 16–277 (LQFFENCGGG…NLPDQCNSFL (262 aa)) enclose the Protein kinase domain. Residues 22-30 (CGGGSFGSV) and lysine 45 each bind ATP. Residue aspartate 133 is the Proton acceptor of the active site. Phosphothreonine; by autocatalysis is present on threonine 161. A Phosphoserine; by autocatalysis modification is found at serine 165. Phosphoserine is present on residues serine 275 and serine 302. Positions 287 to 308 (IEATLERLKKLERDLSFKEQEL) are leucine-zipper. Residues 339–410 (WTEDDVYFWV…KSAIEKLTHD (72 aa)) form the SAM domain. Lysine 434, glutamine 453, and serine 567 each carry phosphoserine. At threonine 586 the chain carries Phosphothreonine. Serine 587, serine 593, and serine 599 each carry phosphoserine. Over residues 624-642 (YQQITPSINPSRSSSPTQY) the composition is skewed to polar residues. The interval 624–802 (YQQITPSINP…RGNYRGRRNF (179 aa)) is disordered. At threonine 628 the chain carries Phosphothreonine. Phosphoserine occurs at positions 634, 638, 649, 650, and 661. Over residues 643–666 (GLSRNFSSLNLSSRDSGFSSLNDS) the composition is skewed to low complexity. A compositionally biased stretch (basic and acidic residues) spans 667–678 (SSERGRYSDRSR). Positions 670–713 (RGRYSDRSRNKYYRGSVSLNSSPKGRYGGKSQHSTPSRERYSGK) are sensing domain (S). A phosphoserine mark is found at serine 685, serine 720, serine 727, and serine 733. A compositionally biased stretch (basic and acidic residues) spans 728–741 (PDFKRSPNDHDRRV). At threonine 744 the chain carries Phosphothreonine. The interval 776-802 (RKKTHRQLSAKTSKERTRGNYRGRRNF) is C-terminal domain (CTD).

Belongs to the protein kinase superfamily. STE Ser/Thr protein kinase family. MAP kinase kinase kinase subfamily. As to quaternary structure, homodimer. Interacts with ZNF33A. Component of a signaling complex containing at least AKAP13, PKN1, MAPK14, MAP3K20 and MAP2K3. Within this complex, AKAP13 interacts directly with PKN1, which in turn recruits MAPK14, MAP2K3 and MAP3K20. Interacts with EIF2AK4/GCN2; promoting EIF2AK4/GCN2 kinase activity. Interacts with isoform ZAKbeta. In terms of assembly, interacts with isoform ZAKalpha. Mg(2+) serves as cofactor. Post-translationally, activated by phosphorylation by PKN1, followed by autophosphorylation on Thr-161 and Ser-165. Autophosphorylation in response to ribotoxic stress promotes dissociation from colliding ribosomes and activation.

Its subcellular location is the cytoplasm. The protein localises to the nucleus. It carries out the reaction L-seryl-[protein] + ATP = O-phospho-L-seryl-[protein] + ADP + H(+). It catalyses the reaction L-threonyl-[protein] + ATP = O-phospho-L-threonyl-[protein] + ADP + H(+). Activated in response to stress, such as ribosomal stress, osmotic shock and ionizing radiation. Activated by phosphorylation by PKN1, followed by autophosphorylation on Thr-161 and Ser-165. Functionally, stress-activated component of a protein kinase signal transduction cascade that promotes programmed cell death in response to various stress, such as ribosomal stress, osmotic shock and ionizing radiation. Acts by catalyzing phosphorylation of MAP kinase kinases, leading to activation of the JNK (MAPK8/JNK1, MAPK9/JNK2 and/or MAPK10/JNK3) and MAP kinase p38 (MAPK11, MAPK12, MAPK13 and/or MAPK14) pathways. Activates JNK through phosphorylation of MAP2K4/MKK4 and MAP2K7/MKK7, and MAP kinase p38 gamma (MAPK12) via phosphorylation of MAP2K3/MKK3 and MAP2K6/MKK6. Involved in stress associated with adrenergic stimulation: contributes to cardiac decompensation during periods of acute cardiac stress. May be involved in regulation of S and G2 cell cycle checkpoint by mediating phosphorylation of CHEK2. In terms of biological role, key component of the stress-activated protein kinase signaling cascade in response to ribotoxic stress or UV-B irradiation. Acts as the proximal sensor of ribosome collisions during the ribotoxic stress response (RSR). Directly binds to the ribosome by inserting its flexible C-terminus into the ribosomal intersubunit space, thereby acting as a sentinel for colliding ribosomes. Upon ribosome collisions, activates either the stress-activated protein kinase signal transduction cascade or the integrated stress response (ISR), leading to programmed cell death or cell survival, respectively. Dangerous levels of ribosome collisions trigger the autophosphorylation and activation of MAP3K20, which dissociates from colliding ribosomes and phosphorylates MAP kinase kinases, leading to activation of the JNK and MAP kinase p38 pathways that promote programmed cell death. Less dangerous levels of ribosome collisions trigger the integrated stress response (ISR): MAP3K20 activates EIF2AK4/GCN2 independently of its protein-kinase activity, promoting EIF2AK4/GCN2-mediated phosphorylation of EIF2S1/eIF-2-alpha. Also acts as a histone kinase by phosphorylating histone H3 at 'Ser-28' (H3S28ph). Isoform that lacks the C-terminal region that mediates ribosome-binding: does not act as a sensor of ribosome collisions in response to ribotoxic stress. May act as an antagonist of isoform ZAKalpha: interacts with isoform ZAKalpha, leading to decrease the expression of isoform ZAKalpha. In Mus musculus (Mouse), this protein is Mitogen-activated protein kinase kinase kinase 20.